Reading from the N-terminus, the 842-residue chain is MDFQERDPPFLPESAQSSKPSSAQQASELWEVVEEPRVRLGTEGVMPERQEGHLLKKRKWPLKGWHKRYFVLEDGILHYATTRQDITKGKLHGSIDVRLSVMSINKKAQRIDLDTEDNIYHLKIKSQDLFQSWVAQLRAHRLAHRLDMPRGSLPSTAHRKVPGAQLPTAATASALPGLGPREKVSSWLRDSDGLDRCSHELSECQGKLQELHRLLQSLESLHRIPSAPVIPTHQASVTTERPKKGKRTSRMWCTQSFAKDDTIGRVGRLHGSVPNLSRYLESRDSSGTRGLPPTDYAHLQRSFWALAQKVHSSLSSVLAALTMERDQLRDMHQGSELSRMGVSEASTGQRRLHSLSTSSDTTADSFSSLNPEEQEALYMKGRELTPQLSQTSILSLADSHTEFFDACEVLLSASSSENEGSEEEESCTSEITTSLSEEMLDLRGAERCQKGGCVPGRPMGPPRRRCLPAASGPGADVSLWNILRNNIGKDLSKVSMPVQLNEPLNTLQRLCEELEYSSLLDQASRIADPCERMVYIAAFAVSAYSSTYHRAGCKPFNPVLGETYECERPDRGFRFISEQVSHHPPISACHAESENFAFWQDMKWKNKFWGKSLEIVPVGTVNVSLPRFGDHFEWNKVTSCIHNVLSGQRWIEHYGEVLIRNTQDSSCHCKITFCKAKYWSSNVHEVQGAVLSRSGRVLHRLFGKWHEGLYRGPTPGGQCIWKPNSMPPDHERNFGFTQFALELNELTAELKRSLPSTDTRLRPDQRYLEEGNIQAAEAQKRRIEQLQRDRRKVMEENNIVHQARFFRRQTDSSGKEWWVTNNTYWRLRAEPGYGNMDGAVLW.

Residues 1-28 (MDFQERDPPFLPESAQSSKPSSAQQASE) form a disordered region. The span at 14–27 (SAQSSKPSSAQQAS) shows a compositional bias: low complexity. The PH domain maps to 47–142 (PERQEGHLLK…WVAQLRAHRL (96 aa)). Threonine 171 is subject to Phosphothreonine. 4 positions are modified to phosphoserine: serine 217, serine 226, serine 256, and serine 272. Positions 330-369 (DMHQGSELSRMGVSEASTGQRRLHSLSTSSDTTADSFSSL) are disordered. Low complexity predominate over residues 354–369 (SLSTSSDTTADSFSSL).

It belongs to the OSBP family. In terms of tissue distribution, expressed in epithelium of small and large intestines (at protein level). Expressed in stomach, duodenum, jejunum, ascending colon, spleen, thymus, lymph node, trachea and leukocytes.

It localises to the cytoplasm. Its subcellular location is the cytosol. The protein localises to the endoplasmic reticulum membrane. The protein resides in the cell membrane. The sequence is that of Oxysterol-binding protein-related protein 7 (OSBPL7) from Homo sapiens (Human).